Here is a 1349-residue protein sequence, read N- to C-terminus: Indole-3-acetaldehyde oxidase (1349 aa).

The 88-residue stretch at 7–94 (AAVVLAVNGK…RCSVTTSEGI (88 aa)) folds into the 2Fe-2S ferredoxin-type domain. Positions 46, 51, and 54 each coordinate [2Fe-2S] cluster. The 179-residue stretch at 237 to 415 (VPVSDDGWYR…LSIFIPEWGS (179 aa)) folds into the FAD-binding PCMH-type domain.

It belongs to the xanthine dehydrogenase family. In terms of assembly, aldehyde oxidases (AO) are homodimers and heterodimers of AO subunits. Requires [2Fe-2S] cluster as cofactor. FAD serves as cofactor. The cofactor is Mo-molybdopterin. Mostly expressed in coleoptiles, and, to a lower extent, in mesocotyl and roots.

The protein resides in the cytoplasm. It carries out the reaction indole-3-acetaldehyde + O2 + H2O = (indol-3-yl)acetate + H2O2 + H(+). In higher plants aldehyde oxidases (AO) appear to be homo- and heterodimeric assemblies of AO subunits with probably different physiological functions. Involved in the biosynthesis of auxin. The protein is Indole-3-acetaldehyde oxidase (AO2) of Zea mays (Maize).